The following is a 1108-amino-acid chain: Retinal guanylyl cyclase 2 (1108 aa).

Positions 1–50 (MFLGPWPFSRLLSWFAISSRLSGQHGLTSSKFLRYLCLLALLPLIWWGQA) are cleaved as a signal peptide. Residues 51–465 (LPYKIGVIGP…QGKICQGGID (415 aa)) lie on the Extracellular side of the membrane. Cysteine 104 and cysteine 132 form a disulfide bridge. Residues 466-490 (PALAMMVCFALLLALLSINGFAYFI) traverse the membrane as a helical segment. At 491-1108 (RRRINKIQLI…AERQLVRNKP (618 aa)) the chain is on the cytoplasmic side. The region spanning 532-812 (FQIISEVQSG…DEIFNQFKTF (281 aa)) is the Protein kinase domain. Residues 884–1014 (TLYFSDIVGF…DTVNTASRME (131 aa)) form the Guanylate cyclase domain.

Belongs to the adenylyl cyclase class-4/guanylyl cyclase family. In terms of assembly, homodimer. Interacts with RD3; promotes the exit of GUCY2F from the endoplasmic reticulum and its trafficking to the photoreceptor outer segments. Post-translationally, there are 9 conserved cysteine residues in sensory guanylate cyclases, 6 in the extracellular domain, which may be involved in intra- or interchain disulfide bonds. As to expression, expressed only in the eye.

The protein localises to the membrane. The protein resides in the photoreceptor outer segment membrane. The enzyme catalyses GTP = 3',5'-cyclic GMP + diphosphate. Activated by GUCA1B when free calcium ions concentration is low, and inhibited by GUCA1B when free calcium ions concentration is high. Inhibited by RD3. Responsible for the synthesis of cyclic GMP (cGMP) in rods and cones of photoreceptors. Plays an essential role in phototransduction, by mediating cGMP replenishment. May also participate in the trafficking of membrane-asociated proteins to the photoreceptor outer segment membrane. This is Retinal guanylyl cyclase 2 (Gucy2f) from Rattus norvegicus (Rat).